We begin with the raw amino-acid sequence, 166 residues long: Endoribonuclease YbeY (166 aa).

The Zn(2+) site is built by H111, H115, and H121. The disordered stretch occupies residues 141–166; sequence LGYPDPYADDESADHPHSDTPSKDHE. Basic and acidic residues predominate over residues 153–166; that stretch reads ADHPHSDTPSKDHE.

The protein belongs to the endoribonuclease YbeY family. Zn(2+) is required as a cofactor.

Its subcellular location is the cytoplasm. Functionally, single strand-specific metallo-endoribonuclease involved in late-stage 70S ribosome quality control and in maturation of the 3' terminus of the 16S rRNA. This chain is Endoribonuclease YbeY, found in Pseudomonas syringae pv. tomato (strain ATCC BAA-871 / DC3000).